A 1154-amino-acid chain; its full sequence is uncharacterized protein (1154 aa).

The first 18 residues, M1–S18, serve as a signal peptide directing secretion. A lipid anchor (N-palmitoyl cysteine) is attached at C19. A lipid anchor (S-diacylglycerol cysteine) is attached at C19. A run of 4 helical transmembrane segments spans residues I288 to G308, L394 to F414, A423 to F443, and I458 to I478.

The protein belongs to the TrbL/VirB6 family.

It localises to the cell membrane. This is an uncharacterized protein from Rickettsia typhi (strain ATCC VR-144 / Wilmington).